We begin with the raw amino-acid sequence, 276 residues long: Aurora kinase C (276 aa).

The 251-residue stretch at 16–266 (FEIGRPLGRG…LAQVLKHPWV (251 aa)) folds into the Protein kinase domain. Residues 22 to 30 (LGRGKFGRV) and Lys-45 each bind ATP. Asp-139 acts as the Proton acceptor in catalysis. Position 171 is a phosphothreonine; by PKA (Thr-171).

The protein belongs to the protein kinase superfamily. Ser/Thr protein kinase family. Aurora subfamily. In terms of assembly, component of the chromosomal passenger complex (CPC) composed of at least BIRC5/survivin, CDCA8/borealin, INCENP, AURKB or AURKC; predominantly independent AURKB- and AURKC-containing complexes exist; in the complex interacts directly with BIRC5/survivin and INCENP. Interacts with TACC1. Expressed only in testis.

It localises to the nucleus. Its subcellular location is the chromosome. The protein localises to the centromere. It is found in the cytoplasm. The protein resides in the cytoskeleton. It localises to the spindle. It carries out the reaction L-seryl-[protein] + ATP = O-phospho-L-seryl-[protein] + ADP + H(+). It catalyses the reaction L-threonyl-[protein] + ATP = O-phospho-L-threonyl-[protein] + ADP + H(+). With respect to regulation, okadaic acid, an inhibitor of protein phosphatase 1 (PP1), protein phosphatase 2A (PP2A) and protein phosphatase 5 (PP5), increases AURKC activity. AURKC is also stabilized through its interaction with INCENP, which also acts as an activator. Its function is as follows. Serine/threonine-protein kinase component of the chromosomal passenger complex (CPC), a complex that acts as a key regulator of mitosis. The CPC complex has essential functions at the centromere in ensuring correct chromosome alignment and segregation and is required for chromatin-induced microtubule stabilization and spindle assembly. Also plays a role in meiosis and more particularly in spermatogenesis. Has redundant cellular functions with AURKB and can rescue an AURKB knockdown. Like AURKB, AURKC phosphorylates histone H3 at 'Ser-10' and 'Ser-28'. AURKC phosphorylates the CPC complex subunits BIRC5/survivin and INCENP leading to increased AURKC activity. Phosphorylates TACC1, another protein involved in cell division, at 'Ser-228'. In Mus musculus (Mouse), this protein is Aurora kinase C (Aurkc).